The sequence spans 210 residues: LexA repressor (210 aa).

The segment at residues 30–50 is a DNA-binding region (H-T-H motif); sequence RVEIAREIGFKSPNAAEEHLK. Residues S127 and K164 each act as for autocatalytic cleavage activity in the active site.

It belongs to the peptidase S24 family. As to quaternary structure, homodimer.

The enzyme catalyses Hydrolysis of Ala-|-Gly bond in repressor LexA.. Represses a number of genes involved in the response to DNA damage (SOS response), including recA and lexA. In the presence of single-stranded DNA, RecA interacts with LexA causing an autocatalytic cleavage which disrupts the DNA-binding part of LexA, leading to derepression of the SOS regulon and eventually DNA repair. In Actinobacillus pleuropneumoniae serotype 7 (strain AP76), this protein is LexA repressor.